Consider the following 361-residue polypeptide: Beta-hexosaminidase (361 aa).

Residues Asp-69, Arg-77, Arg-144, and 174–175 (KH) each bind substrate. His-187 serves as the catalytic Proton donor/acceptor. Residue Asp-258 is the Nucleophile of the active site.

It belongs to the glycosyl hydrolase 3 family. NagZ subfamily.

The protein localises to the cytoplasm. The enzyme catalyses Hydrolysis of terminal non-reducing N-acetyl-D-hexosamine residues in N-acetyl-beta-D-hexosaminides.. The protein operates within cell wall biogenesis; peptidoglycan recycling. In terms of biological role, plays a role in peptidoglycan recycling by cleaving the terminal beta-1,4-linked N-acetylglucosamine (GlcNAc) from peptide-linked peptidoglycan fragments, giving rise to free GlcNAc, anhydro-N-acetylmuramic acid and anhydro-N-acetylmuramic acid-linked peptides. The chain is Beta-hexosaminidase from Neisseria meningitidis serogroup A / serotype 4A (strain DSM 15465 / Z2491).